A 68-amino-acid chain; its full sequence is Large ribosomal subunit protein uL29 (68 aa).

The protein belongs to the universal ribosomal protein uL29 family.

This is Large ribosomal subunit protein uL29 from Streptococcus uberis (strain ATCC BAA-854 / 0140J).